A 369-amino-acid polypeptide reads, in one-letter code: H-2 class I histocompatibility antigen, K-K alpha chain (369 aa).

An N-terminal signal peptide occupies residues 1–21 (MAPCMLLLLLAAALAPTQTRA). The tract at residues 22 to 111 (GPHSLRYFHT…ALRYYNQSAG (90 aa)) is alpha-1. Over 22-305 (GPHSLRYFHT…EPPPSTVSNT (284 aa)) the chain is Extracellular. The N-linked (GlcNAc...) asparagine glycan is linked to Asn-107. An alpha-2 region spans residues 112 to 203 (GSHTFQRMYG…QLGNATLPRT (92 aa)). A disulfide bond links Cys-122 and Cys-185. Asn-197 carries N-linked (GlcNAc...) asparagine glycosylation. Residues 204 to 295 (DSPKAHVTRH…GLPEPLTLRW (92 aa)) form an alpha-3 region. The 89-residue stretch at 206-294 (PKAHVTRHSR…QGLPEPLTLR (89 aa)) folds into the Ig-like C1-type domain. The cysteines at positions 224 and 280 are disulfide-linked. Positions 296–305 (EPPPSTVSNT) are connecting peptide. A helical transmembrane segment spans residues 306 to 328 (VIIAVLVVLGAAIVTGAVVAFVM). Residues 329-369 (KMRRRNTGGKGGDYALAPGSQTSDLSLPDCKVMVHDPHSLA) are Cytoplasmic-facing. A phosphoserine mark is found at Ser-351 and Ser-354.

This sequence belongs to the MHC class I family. Heterodimer of an alpha chain and a beta chain (beta-2-microglobulin).

The protein resides in the membrane. Its function is as follows. Involved in the presentation of foreign antigens to the immune system. In Mus musculus (Mouse), this protein is H-2 class I histocompatibility antigen, K-K alpha chain (H2-K1).